The following is a 465-amino-acid chain: 3-isopropylmalate dehydratase large subunit (465 aa).

[4Fe-4S] cluster is bound by residues C347, C407, and C410. The tract at residues 416-443 (DTLRPGERSASTSNRNFEGRQGPGGRTH) is disordered.

Belongs to the aconitase/IPM isomerase family. LeuC type 1 subfamily. In terms of assembly, heterodimer of LeuC and LeuD. [4Fe-4S] cluster serves as cofactor.

The catalysed reaction is (2R,3S)-3-isopropylmalate = (2S)-2-isopropylmalate. Its pathway is amino-acid biosynthesis; L-leucine biosynthesis; L-leucine from 3-methyl-2-oxobutanoate: step 2/4. In terms of biological role, catalyzes the isomerization between 2-isopropylmalate and 3-isopropylmalate, via the formation of 2-isopropylmaleate. This is 3-isopropylmalate dehydratase large subunit from Frankia casuarinae (strain DSM 45818 / CECT 9043 / HFP020203 / CcI3).